A 438-amino-acid polypeptide reads, in one-letter code: RNA ligase (438 aa).

ATP is bound by residues Tyr48, Arg63, and Lys83. Lys127 acts as the N6-AMP-lysine intermediate in catalysis. Residues Glu198, Lys311, and Lys313 each contribute to the ATP site. Mg(2+) is bound at residue Asp342.

Mg(2+) is required as a cofactor. Requires Mn(2+) as cofactor.

Its function is as follows. Involved in countering a host defense mechanism which, following viral infection, activates the host induced anticodon nuclease and shuts off viral translation. Repairs 5'-PO4 and 3'-OH groups in the cleaved host tRNA. The chain is RNA ligase from Rhodothermus phage RM378 (Bacteriophage RM378).